Reading from the N-terminus, the 361-residue chain is Peptide chain release factor 1 (361 aa).

Q235 is subject to N5-methylglutamine. The interval 286–305 is disordered; it reads IDSARSAERKQKVGSGDRSE.

Belongs to the prokaryotic/mitochondrial release factor family. Methylated by PrmC. Methylation increases the termination efficiency of RF1.

The protein resides in the cytoplasm. Its function is as follows. Peptide chain release factor 1 directs the termination of translation in response to the peptide chain termination codons UAG and UAA. The protein is Peptide chain release factor 1 of Rhodopseudomonas palustris (strain HaA2).